A 767-amino-acid chain; its full sequence is Probable beta-glucosidase K (767 aa).

N-linked (GlcNAc...) asparagine glycosylation occurs at Asn-19. Asp-232 is a catalytic residue. 3 N-linked (GlcNAc...) asparagine glycosylation sites follow: Asn-324, Asn-477, and Asn-749. Residues Glu-405–Val-552 form the PA14 domain. The tract at residues Leu-727–Arg-767 is disordered. The span at Arg-743–Gln-757 shows a compositional bias: polar residues.

The protein belongs to the glycosyl hydrolase 3 family.

It localises to the secreted. It catalyses the reaction Hydrolysis of terminal, non-reducing beta-D-glucosyl residues with release of beta-D-glucose.. Its pathway is glycan metabolism; cellulose degradation. Functionally, beta-glucosidases are one of a number of cellulolytic enzymes involved in the degradation of cellulosic biomass. Catalyzes the last step releasing glucose from the inhibitory cellobiose. This chain is Probable beta-glucosidase K (bglK), found in Aspergillus fumigatus (strain ATCC MYA-4609 / CBS 101355 / FGSC A1100 / Af293) (Neosartorya fumigata).